A 78-amino-acid polypeptide reads, in one-letter code: Large ribosomal subunit protein bL28 (78 aa).

A disordered region spans residues 1–25 (MSRVCQVTGKRPAVGNNRSHAKNAT).

This sequence belongs to the bacterial ribosomal protein bL28 family.

In Aliivibrio salmonicida (strain LFI1238) (Vibrio salmonicida (strain LFI1238)), this protein is Large ribosomal subunit protein bL28.